Reading from the N-terminus, the 850-residue chain is Protein SEY1 (850 aa).

Residues 1 to 27 are disordered; the sequence is MSDLPPPDLGSEEISVSPTSSSSSFVP. Residues 1 to 741 lie on the Cytoplasmic side of the membrane; that stretch reads MSDLPPPDLG…KRALIQHVTH (741 aa). Residues 12–27 show a composition bias toward low complexity; that stretch reads EEISVSPTSSSSSFVP. Positions 64–297 constitute a GB1/RHD3-type G domain; that stretch reads NNNYHIVSVF…NEDFLFKKYY (234 aa). Residue 74–81 participates in GTP binding; the sequence is GSQSTGKS. A helical membrane pass occupies residues 742–762; that stretch reads IPYYIYIVILVLGWNEFMAVL. At 763–765 the chain is on the lumenal side; it reads RNP. Residues 766–786 traverse the membrane as a helical segment; the sequence is FFFTLLLMLGAGTYVLYHLNL. Topologically, residues 787–850 are cytoplasmic; the sequence is LKPAMVVVQR…SDLTPPGEGS (64 aa). The tract at residues 816–850 is disordered; sequence QPQEHAKRLSKMAGITEDKPEEIEMSDLTPPGEGS.

It belongs to the TRAFAC class dynamin-like GTPase superfamily. GB1/RHD3 GTPase family. RHD3 subfamily.

Its subcellular location is the endoplasmic reticulum membrane. Functionally, cooperates with the reticulon proteins and tubule-shaping DP1 family proteins to generate and maintain the structure of the tubular endoplasmic reticulum network. Has GTPase activity, which is required for its function in ER organization. The polypeptide is Protein SEY1 (Meyerozyma guilliermondii (strain ATCC 6260 / CBS 566 / DSM 6381 / JCM 1539 / NBRC 10279 / NRRL Y-324) (Yeast)).